We begin with the raw amino-acid sequence, 229 residues long: UPF0488 protein C8orf33 homolog (229 aa).

N-acetylalanine is present on A2. An Omega-N-methylarginine modification is found at R27. A disordered region spans residues 55–101; sequence SRAHPLGDEGGTASKKQNKKKKTRNRASVANGGEKASEKLAPEEVPL. Over residues 70–79 the composition is skewed to basic residues; it reads KQNKKKKTRN. S82 is subject to Phosphoserine.

This sequence belongs to the UPF0488 family.

In Pongo abelii (Sumatran orangutan), this protein is UPF0488 protein C8orf33 homolog.